The sequence spans 390 residues: MTGDVPDRIKVLWFLPTHGDSRYLGTAEGGRSVDLPYLTQVAKAADTLGYYGVLLPTGRSCEDSWVIASALVPLTERLRFLVAVRPGLQSPTLAARMTATLDRISNGRLLINVVTGGDPLENKGDGIFLSHAERYEVTQEFLRIYKRVLSGETVEHQGKHLHIEDGRLLFPPVQTPYPPLYFGGSSDAGSTVAAQEIDKYLTWGEPPADVERKLDAVRELAEKAGRKLSFGIRLHVIARETTEEAWAAADRLISRLDDATIASAQKVFARMDSVGQARMSALHGGDRAKLEIAPNLWAGVGLVRGGAGTALVGDPDTIAERIDEYRRLGIDTFILSGYPHLEEAYRFGELVLPKLPTDHPVKATGSSVNTGPFGETIAGDHRPKSLASAS.

The disordered stretch occupies residues 364–390; it reads TGSSVNTGPFGETIAGDHRPKSLASAS.

Belongs to the SsuD family.

The enzyme catalyses an alkanesulfonate + FMNH2 + O2 = an aldehyde + FMN + sulfite + H2O + 2 H(+). Its function is as follows. Catalyzes the desulfonation of aliphatic sulfonates. In Mesorhizobium japonicum (strain LMG 29417 / CECT 9101 / MAFF 303099) (Mesorhizobium loti (strain MAFF 303099)), this protein is Alkanesulfonate monooxygenase 1 (ssuD1).